A 237-amino-acid polypeptide reads, in one-letter code: 2',3'-cyclic-nucleotide 3'-phosphodiesterase (237 aa).

His21 functions as the Proton donor/acceptor in the catalytic mechanism. Substrate is bound at residue Thr23. A disordered region spans residues His117 to Asp137. His167 functions as the Proton donor/acceptor in the catalytic mechanism. Substrate-binding residues include Ser169 and Tyr172.

Belongs to the 2H phosphoesterase superfamily. CPD1 family.

Its subcellular location is the golgi apparatus. It carries out the reaction a nucleoside 2',3'-cyclic phosphate + H2O = a nucleoside 2'-phosphate + H(+). Functionally, involved in the metabolism of ADP-ribose 1',2'-cyclic phosphate which is produced as a consequence of tRNA splicing. The sequence is that of 2',3'-cyclic-nucleotide 3'-phosphodiesterase (CPD1) from Debaryomyces hansenii (strain ATCC 36239 / CBS 767 / BCRC 21394 / JCM 1990 / NBRC 0083 / IGC 2968) (Yeast).